We begin with the raw amino-acid sequence, 842 residues long: Oligopeptide transporter phomP2' (842 aa).

Residues 1–58 (MEADPKVPFTDEMNIQDEHNWESGSWSSSRRSNDSNVTLLSRRSSVEQHEDERQKDSD) form a disordered region. Low complexity predominate over residues 23-36 (SGSWSSSRRSNDSN). N-linked (GlcNAc...) asparagine glycans are attached at residues Asn-33 and Asn-36. Residues 44-58 (SSVEQHEDERQKDSD) show a composition bias toward basic and acidic residues. The next 6 membrane-spanning stretches (helical) occupy residues 105–125 (VWLL…VYYF), 177–197 (ALVV…GPLS), 210–230 (PWAI…VGLY), 268–288 (VFMA…FVFP), 315–335 (GFGL…SPLF), and 345–365 (FVGA…SDAL). Residues Asn-386 and Asn-398 are each glycosylated (N-linked (GlcNAc...) asparagine). 4 helical membrane passes run 415-435 (AMHF…AVLF), 478-498 (AWYA…LYAG), 505-525 (WGLQ…GMLF), and 585-605 (WELL…NWAV). Residues 629–649 (QGLGLGQGGGGGGGGGGGGGQ) are compositionally biased toward gly residues. The segment at 629-657 (QGLGLGQGGGGGGGGGGGGGQQQRAAGAH) is disordered. A run of 3 helical transmembrane segments spans residues 668–688 (NFFS…FGGG), 700–720 (WLLP…WLIH), and 731–751 (WPLH…FPTT). N-linked (GlcNAc...) asparagine glycosylation is present at Asn-752. The chain crosses the membrane as a helical span at residues 784–804 (AGLDCGAQLVQMVLGLAFLVF).

This sequence belongs to the oligopeptide OPT transporter family.

Its subcellular location is the membrane. Functionally, oligopeptide transporter; part of the gene cluster that mediates the biosynthesis of the phomopsins, a group of hexapeptide mycotoxins which infects lupins and causes lupinosis disease in livestock. The chain is Oligopeptide transporter phomP2' from Diaporthe leptostromiformis (Lupinosis disease fungus).